The chain runs to 642 residues: Kinesin-like protein KIF12 (642 aa).

Residues 1 to 13 (MEERGSPDGDPAR) show a composition bias toward basic and acidic residues. The segment at 1–25 (MEERGSPDGDPARNLEQGPEGSETP) is disordered. Ser-6 carries the phosphoserine modification. Positions 25 to 360 (PIQVVLRVRP…LRYASRAQRI (336 aa)) constitute a Kinesin motor domain. Position 104 to 111 (104 to 111 (GQTGSGKT)) interacts with ATP. Phosphoserine is present on Ser-369. Positions 376–465 (QQVENELLRL…QVHDLERRLL (90 aa)) form a coiled coil. Disordered regions lie at residues 531-561 (GHIS…SQSD) and 579-642 (PSAP…LSSC). The span at 538 to 548 (WPPPWAPPPSP) shows a compositional bias: pro residues. Residues 610 to 642 (TLTQQINSSLHLSQRQPQPSEDTQSPGQGLSSC) are compositionally biased toward polar residues. Ser-634 is subject to Phosphoserine.

This sequence belongs to the TRAFAC class myosin-kinesin ATPase superfamily. Kinesin family. As to expression, expressed in the liver.

It localises to the cytoplasm. It is found in the cytoskeleton. This is Kinesin-like protein KIF12 (Kif12) from Mus musculus (Mouse).